Consider the following 459-residue polypeptide: Bifunctional protein GlmU (459 aa).

Residues 1–229 (MLTQEIIIVI…YEEILGINNK (229 aa)) are pyrophosphorylase. UDP-N-acetyl-alpha-D-glucosamine contacts are provided by residues 11-14 (LAAG), lysine 25, glutamine 76, 81-82 (GT), 103-105 (YGD), glycine 140, glutamate 154, and asparagine 227. Aspartate 105 lines the Mg(2+) pocket. Asparagine 227 serves as a coordination point for Mg(2+). The linker stretch occupies residues 230-250 (LQLSNLEKIFQKKQINKLLIN). The N-acetyltransferase stretch occupies residues 251 to 459 (GVTIKDPSHF…MRSKKIIKKN (209 aa)). Residues arginine 333 and lysine 351 each coordinate UDP-N-acetyl-alpha-D-glucosamine. Catalysis depends on histidine 363, which acts as the Proton acceptor. UDP-N-acetyl-alpha-D-glucosamine is bound by residues tyrosine 366 and asparagine 377. Acetyl-CoA contacts are provided by residues alanine 380, 386–387 (NY), serine 405, and alanine 423.

The protein in the N-terminal section; belongs to the N-acetylglucosamine-1-phosphate uridyltransferase family. It in the C-terminal section; belongs to the transferase hexapeptide repeat family. As to quaternary structure, homotrimer. Mg(2+) is required as a cofactor.

The protein resides in the cytoplasm. The enzyme catalyses alpha-D-glucosamine 1-phosphate + acetyl-CoA = N-acetyl-alpha-D-glucosamine 1-phosphate + CoA + H(+). It carries out the reaction N-acetyl-alpha-D-glucosamine 1-phosphate + UTP + H(+) = UDP-N-acetyl-alpha-D-glucosamine + diphosphate. It participates in nucleotide-sugar biosynthesis; UDP-N-acetyl-alpha-D-glucosamine biosynthesis; N-acetyl-alpha-D-glucosamine 1-phosphate from alpha-D-glucosamine 6-phosphate (route II): step 2/2. The protein operates within nucleotide-sugar biosynthesis; UDP-N-acetyl-alpha-D-glucosamine biosynthesis; UDP-N-acetyl-alpha-D-glucosamine from N-acetyl-alpha-D-glucosamine 1-phosphate: step 1/1. It functions in the pathway bacterial outer membrane biogenesis; LPS lipid A biosynthesis. Catalyzes the last two sequential reactions in the de novo biosynthetic pathway for UDP-N-acetylglucosamine (UDP-GlcNAc). The C-terminal domain catalyzes the transfer of acetyl group from acetyl coenzyme A to glucosamine-1-phosphate (GlcN-1-P) to produce N-acetylglucosamine-1-phosphate (GlcNAc-1-P), which is converted into UDP-GlcNAc by the transfer of uridine 5-monophosphate (from uridine 5-triphosphate), a reaction catalyzed by the N-terminal domain. This is Bifunctional protein GlmU from Buchnera aphidicola subsp. Acyrthosiphon pisum (strain 5A).